A 167-amino-acid polypeptide reads, in one-letter code: D-aminoacyl-tRNA deacylase 2 (167 aa).

Positions 159–160 match the Gly-transPro motif, allows the protein to recognize chirality of D-amino acids motif; the sequence is GP.

The protein belongs to the DTD family. Homodimer.

The protein localises to the cytoplasm. It catalyses the reaction a D-aminoacyl-tRNA + H2O = a tRNA + a D-alpha-amino acid + H(+). The catalysed reaction is glycyl-tRNA(Ala) + H2O = tRNA(Ala) + glycine + H(+). The enzyme catalyses D-tyrosyl-tRNA(Tyr) + H2O = D-tyrosine + tRNA(Tyr). It carries out the reaction L-alanyl-tRNA(Thr) + H2O = tRNA(Thr) + L-alanine + H(+). In terms of biological role, deacylates mischarged D-aminoacyl-tRNAs. Also deacylates mischarged glycyl-tRNA(Ala), protecting cells against glycine mischarging by AlaRS. Probably acts by rejecting L-amino acids from its binding site rather than specific recognition of D-amino acids. Catalyzes the hydrolysis of D-tyrosyl-tRNA(Tyr), has no activity on correctly charged L-tyrosyl-tRNA(Tyr). By recycling D-aminoacyl-tRNA to D-amino acids and free tRNA molecules, this enzyme counteracts the toxicity associated with the formation of D-aminoacyl-tRNA entities in vivo and helps enforce protein L-homochirality. In contrast to DTD1, deacylates L-Ala mischarged on tRNA(Thr)(G4.U69) by alanine-tRNA ligase AARS. Can deacylate L-Ala due to a relaxed specificity for substrate chirality caused by the trans conformation of the Gly-Pro motif in the active site. Also hydrolyzes correctly charged, achiral, glycyl-tRNA(Gly) in vitro, although in vivo EEF1A1/EF-Tu may protect cognate achiral glycyl-tRNA(Gly) from DTD2-mediated deacetylation. The chain is D-aminoacyl-tRNA deacylase 2 (DTD2) from Gallus gallus (Chicken).